We begin with the raw amino-acid sequence, 370 residues long: Spermidine/putrescine import ATP-binding protein PotA 1 (370 aa).

The region spanning 12 to 250 (VSIRAVRKVY…PGNRFVADFI (239 aa)) is the ABC transporter domain. Residue 48 to 55 (GPSGCGKT) participates in ATP binding.

It belongs to the ABC transporter superfamily. Spermidine/putrescine importer (TC 3.A.1.11.1) family. As to quaternary structure, the complex is composed of two ATP-binding proteins (PotA), two transmembrane proteins (PotB and PotC) and a solute-binding protein (PotD).

The protein resides in the cell inner membrane. It carries out the reaction ATP + H2O + polyamine-[polyamine-binding protein]Side 1 = ADP + phosphate + polyamineSide 2 + [polyamine-binding protein]Side 1.. Functionally, part of the ABC transporter complex PotABCD involved in spermidine/putrescine import. Responsible for energy coupling to the transport system. This is Spermidine/putrescine import ATP-binding protein PotA 1 from Pseudomonas aeruginosa (strain ATCC 15692 / DSM 22644 / CIP 104116 / JCM 14847 / LMG 12228 / 1C / PRS 101 / PAO1).